Here is a 23-residue protein sequence, read N- to C-terminus: Coenzyme PQQ synthesis protein A (23 aa).

The segment at residues Glu-15–Tyr-19 is a cross-link (pyrroloquinoline quinone (Glu-Tyr)).

It belongs to the PqqA family.

The protein operates within cofactor biosynthesis; pyrroloquinoline quinone biosynthesis. Its function is as follows. Required for coenzyme pyrroloquinoline quinone (PQQ) biosynthesis. PQQ is probably formed by cross-linking a specific glutamate to a specific tyrosine residue and excising these residues from the peptide. The protein is Coenzyme PQQ synthesis protein A of Ectopseudomonas mendocina (strain ymp) (Pseudomonas mendocina).